Reading from the N-terminus, the 206-residue chain is Ribonuclease M5 (206 aa).

The 84-residue stretch at Asn8–Pro91 folds into the Toprim domain. Mg(2+)-binding residues include Glu14, Asp60, and Asp62.

It belongs to the ribonuclease M5 family. Mg(2+) is required as a cofactor.

It localises to the cytoplasm. The enzyme catalyses Endonucleolytic cleavage of RNA, removing 21 and 42 nucleotides, respectively, from the 5'- and 3'-termini of a 5S-rRNA precursor.. Required for correct processing of both the 5' and 3' ends of 5S rRNA precursor. Cleaves both sides of a double-stranded region yielding mature 5S rRNA in one step. This chain is Ribonuclease M5, found in Lactococcus lactis subsp. lactis (strain IL1403) (Streptococcus lactis).